A 151-amino-acid chain; its full sequence is Transcriptional repressor NrdR (151 aa).

The segment at 3 to 34 (CPFCHNDQSRVIDSRVIDSGSAIRRRRECTQC) is a zinc-finger region. One can recognise an ATP-cone domain in the interval 46–136 (LLVVKRNGLT…VYKSFESADD (91 aa)).

It belongs to the NrdR family. It depends on Zn(2+) as a cofactor.

Negatively regulates transcription of bacterial ribonucleotide reductase nrd genes and operons by binding to NrdR-boxes. This is Transcriptional repressor NrdR from Corynebacterium diphtheriae (strain ATCC 700971 / NCTC 13129 / Biotype gravis).